A 254-amino-acid chain; its full sequence is Alcohol dehydrogenase 1 (254 aa).

Position 10–33 (10–33 (FVAGLGGIGLDTSREIVKSGPKNL)) interacts with NAD(+). Substrate is bound at residue serine 138. Catalysis depends on tyrosine 151, which acts as the Proton acceptor.

It belongs to the short-chain dehydrogenases/reductases (SDR) family. Homodimer.

It catalyses the reaction a primary alcohol + NAD(+) = an aldehyde + NADH + H(+). It carries out the reaction a secondary alcohol + NAD(+) = a ketone + NADH + H(+). The chain is Alcohol dehydrogenase 1 (Adh1) from Drosophila hydei (Fruit fly).